We begin with the raw amino-acid sequence, 967 residues long: Alanine--tRNA ligase, cytoplasmic (967 aa).

Zn(2+)-binding residues include His-605, His-609, Cys-724, and His-728.

This sequence belongs to the class-II aminoacyl-tRNA synthetase family. Monomer. The cofactor is Zn(2+). The N-terminus is blocked.

Its subcellular location is the cytoplasm. It carries out the reaction tRNA(Ala) + L-alanine + ATP = L-alanyl-tRNA(Ala) + AMP + diphosphate. Catalyzes the attachment of alanine to tRNA(Ala) in a two-step reaction: alanine is first activated by ATP to form Ala-AMP and then transferred to the acceptor end of tRNA(Ala). Also edits incorrectly charged tRNA(Ala) via its editing domain. The polypeptide is Alanine--tRNA ligase, cytoplasmic (Bombyx mori (Silk moth)).